Reading from the N-terminus, the 121-residue chain is Small ribosomal subunit protein uS13 (121 aa).

The disordered stretch occupies residues 91 to 121 (HRRGLPVRGQKTKNNARTRKGPVKTVANKKK).

The protein belongs to the universal ribosomal protein uS13 family. As to quaternary structure, part of the 30S ribosomal subunit. Forms a loose heterodimer with protein S19. Forms two bridges to the 50S subunit in the 70S ribosome.

Its function is as follows. Located at the top of the head of the 30S subunit, it contacts several helices of the 16S rRNA. In the 70S ribosome it contacts the 23S rRNA (bridge B1a) and protein L5 of the 50S subunit (bridge B1b), connecting the 2 subunits; these bridges are implicated in subunit movement. Contacts the tRNAs in the A and P-sites. This chain is Small ribosomal subunit protein uS13, found in Staphylococcus aureus (strain Mu3 / ATCC 700698).